The chain runs to 627 residues: Probable inactive receptor kinase At3g02880 (627 aa).

An N-terminal signal peptide occupies residues 1-23; that stretch reads MKYKRKLSLSVVFLFVFYLAAVT. 5 LRR repeats span residues 91 to 112, 115 to 137, 139 to 161, 163 to 184, and 185 to 206; these read QLKTLSLRFNSLSGPIPSDFSN, LLRYLYLQGNAFSGEIPSLLFTL, SIIRINLGENKFSGRIPDNVNSA, RLVTLYLERNQLSGPIPEITLP, and LQQFNVSSNQLNGSIPSSLSSW. The tract at residues 222–246 is disordered; the sequence is DTCEAESPNGGDAGGPNTPPEKKDS. The helical transmembrane segment at 253–273 threads the bilayer; sequence AIVGIVIGCVVGLLLLLLILF. The region spanning 345-620 is the Protein kinase domain; that stretch reads KASAEVLGKG…LIEEVSHSSG (276 aa). At Ser-347 the chain carries Phosphoserine. Residues 351–359 and Lys-373 each bind ATP; that span reads LGKGTVGSS. The chain crosses the membrane as a helical span at residues 389–409; sequence LHVLGSMSHANLVTLIAYYFS. Ser-424 is subject to Phosphoserine. Thr-444 bears the Phosphothreonine mark. The residue at position 519 (Ser-519) is a Phosphoserine. Position 595 is a phosphothreonine (Thr-595). Ser-621 and Ser-626 each carry phosphoserine.

Belongs to the protein kinase superfamily. Ser/Thr protein kinase family.

It is found in the membrane. The chain is Probable inactive receptor kinase At3g02880 from Arabidopsis thaliana (Mouse-ear cress).